The sequence spans 163 residues: Transcriptional repressor NrdR (163 aa).

Residues 3–34 fold into a zinc finger; sequence CPKCNYLKSSVVDSRQAEEGNTIRRRRECENC. The ATP-cone domain maps to 49-139; the sequence is LLVVKKDGTR…VYRSFKDVDE (91 aa).

Belongs to the NrdR family. Zn(2+) serves as cofactor.

Its function is as follows. Negatively regulates transcription of bacterial ribonucleotide reductase nrd genes and operons by binding to NrdR-boxes. This is Transcriptional repressor NrdR from Streptococcus mutans serotype c (strain ATCC 700610 / UA159).